The chain runs to 352 residues: Histidine biosynthesis bifunctional protein HisB (352 aa).

The segment at 1–163 (MKKILFIDRD…MVASAIINDA (163 aa)) is histidinol-phosphatase. D8 acts as the Nucleophile in catalysis. Mg(2+) is bound by residues D8 and D10. D10 serves as the catalytic Proton donor. Positions 91, 93, 99, and 101 each coordinate Zn(2+). D128 lines the Mg(2+) pocket. An imidazoleglycerol-phosphate dehydratase region spans residues 164–352 (RKASVQRKTK…NYLPSTKGVL (189 aa)).

In the N-terminal section; belongs to the histidinol-phosphatase family. The protein in the C-terminal section; belongs to the imidazoleglycerol-phosphate dehydratase family. Mg(2+) serves as cofactor. It depends on Zn(2+) as a cofactor.

It is found in the cytoplasm. The catalysed reaction is D-erythro-1-(imidazol-4-yl)glycerol 3-phosphate = 3-(imidazol-4-yl)-2-oxopropyl phosphate + H2O. It catalyses the reaction L-histidinol phosphate + H2O = L-histidinol + phosphate. It functions in the pathway amino-acid biosynthesis; L-histidine biosynthesis; L-histidine from 5-phospho-alpha-D-ribose 1-diphosphate: step 6/9. The protein operates within amino-acid biosynthesis; L-histidine biosynthesis; L-histidine from 5-phospho-alpha-D-ribose 1-diphosphate: step 8/9. The protein is Histidine biosynthesis bifunctional protein HisB of Legionella pneumophila subsp. pneumophila (strain Philadelphia 1 / ATCC 33152 / DSM 7513).